Here is an 84-residue protein sequence, read N- to C-terminus: Putative membrane protein insertion efficiency factor (84 aa).

The segment at 60–84 (WSQPGEDPVPDHFSLKRNDTRKQSH) is disordered. Positions 68-84 (VPDHFSLKRNDTRKQSH) are enriched in basic and acidic residues.

This sequence belongs to the UPF0161 family.

Its subcellular location is the cell membrane. Could be involved in insertion of integral membrane proteins into the membrane. This Streptococcus gordonii (strain Challis / ATCC 35105 / BCRC 15272 / CH1 / DL1 / V288) protein is Putative membrane protein insertion efficiency factor.